A 378-amino-acid polypeptide reads, in one-letter code: Erythronate-4-phosphate dehydrogenase (378 aa).

2 residues coordinate substrate: Ser-45 and Thr-66. 2 residues coordinate NAD(+): Asp-146 and Thr-175. Residue Arg-208 is part of the active site. Asp-232 contributes to the NAD(+) binding site. Glu-237 is a catalytic residue. Residue His-254 is the Proton donor of the active site. Gly-257 contacts NAD(+). Tyr-258 provides a ligand contact to substrate.

The protein belongs to the D-isomer specific 2-hydroxyacid dehydrogenase family. PdxB subfamily. In terms of assembly, homodimer.

It localises to the cytoplasm. It catalyses the reaction 4-phospho-D-erythronate + NAD(+) = (R)-3-hydroxy-2-oxo-4-phosphooxybutanoate + NADH + H(+). It functions in the pathway cofactor biosynthesis; pyridoxine 5'-phosphate biosynthesis; pyridoxine 5'-phosphate from D-erythrose 4-phosphate: step 2/5. Catalyzes the oxidation of erythronate-4-phosphate to 3-hydroxy-2-oxo-4-phosphonooxybutanoate. This chain is Erythronate-4-phosphate dehydrogenase, found in Citrobacter koseri (strain ATCC BAA-895 / CDC 4225-83 / SGSC4696).